Reading from the N-terminus, the 513-residue chain is Na(+)/H(+) antiporter NhaB (513 aa).

9 helical membrane passes run I21–V41, I88–M108, L119–F139, L243–F263, M299–A318, I322–G344, P350–L370, L389–G409, and M477–L497.

It belongs to the NhaB Na(+)/H(+) (TC 2.A.34) antiporter family.

Its subcellular location is the cell inner membrane. It catalyses the reaction 2 Na(+)(in) + 3 H(+)(out) = 2 Na(+)(out) + 3 H(+)(in). Na(+)/H(+) antiporter that extrudes sodium in exchange for external protons. The chain is Na(+)/H(+) antiporter NhaB from Actinobacillus pleuropneumoniae serotype 5b (strain L20).